Reading from the N-terminus, the 58-residue chain is Large ribosomal subunit protein bL32c (58 aa).

Residues 1–23 (MAVPKKRTSKAKKNARKSVWKKK) are disordered.

It belongs to the bacterial ribosomal protein bL32 family.

It localises to the plastid. The protein localises to the chloroplast. This is Large ribosomal subunit protein bL32c (rpl32-A) from Trieres chinensis (Marine centric diatom).